A 274-amino-acid polypeptide reads, in one-letter code: Formamidopyrimidine-DNA glycosylase (274 aa).

Residue P2 is the Schiff-base intermediate with DNA of the active site. The Proton donor role is filled by E3. Residue K58 is the Proton donor; for beta-elimination activity of the active site. DNA-binding residues include H91 and R110. The FPG-type zinc-finger motif lies at 238–272 (QVYDKTGQECVRCGTIIEKIQLGGRGTHFCPNCQR). R262 serves as the catalytic Proton donor; for delta-elimination activity.

Belongs to the FPG family. Monomer. It depends on Zn(2+) as a cofactor.

It carries out the reaction Hydrolysis of DNA containing ring-opened 7-methylguanine residues, releasing 2,6-diamino-4-hydroxy-5-(N-methyl)formamidopyrimidine.. The catalysed reaction is 2'-deoxyribonucleotide-(2'-deoxyribose 5'-phosphate)-2'-deoxyribonucleotide-DNA = a 3'-end 2'-deoxyribonucleotide-(2,3-dehydro-2,3-deoxyribose 5'-phosphate)-DNA + a 5'-end 5'-phospho-2'-deoxyribonucleoside-DNA + H(+). Involved in base excision repair of DNA damaged by oxidation or by mutagenic agents. Acts as a DNA glycosylase that recognizes and removes damaged bases. Has a preference for oxidized purines, such as 7,8-dihydro-8-oxoguanine (8-oxoG). Has AP (apurinic/apyrimidinic) lyase activity and introduces nicks in the DNA strand. Cleaves the DNA backbone by beta-delta elimination to generate a single-strand break at the site of the removed base with both 3'- and 5'-phosphates. The sequence is that of Formamidopyrimidine-DNA glycosylase from Streptococcus pneumoniae (strain ATCC BAA-255 / R6).